An 82-amino-acid polypeptide reads, in one-letter code: Small ribosomal subunit protein uS17 (82 aa).

It belongs to the universal ribosomal protein uS17 family. As to quaternary structure, part of the 30S ribosomal subunit.

Its function is as follows. One of the primary rRNA binding proteins, it binds specifically to the 5'-end of 16S ribosomal RNA. This is Small ribosomal subunit protein uS17 from Pelobacter propionicus (strain DSM 2379 / NBRC 103807 / OttBd1).